The sequence spans 160 residues: MDLRLLHGVAYGHSWFGKWGYRFCSGSFGVEEHHYHRAIAFLTSISLVDDITANFRENKANLNIGDIVRCYRDMSEIQLTTLQDLLRFMLTIKSRAPPIRIPIGKIEAPSVVLPSMKAYGTRACPQVKQCPKDKEKSVKCRKFALPLPYRLAFTSLSVVV.

It localises to the mitochondrion. This is an uncharacterized protein from Arabidopsis thaliana (Mouse-ear cress).